The sequence spans 170 residues: ATP synthase subunit b (170 aa).

A helical transmembrane segment spans residues 3–23 (IKILFFLALPFLAYASEHGGT).

The protein belongs to the ATPase B chain family. In terms of assembly, F-type ATPases have 2 components, F(1) - the catalytic core - and F(0) - the membrane proton channel. F(1) has five subunits: alpha(3), beta(3), gamma(1), delta(1), epsilon(1). F(0) has three main subunits: a(1), b(2) and c(10-14). The alpha and beta chains form an alternating ring which encloses part of the gamma chain. F(1) is attached to F(0) by a central stalk formed by the gamma and epsilon chains, while a peripheral stalk is formed by the delta and b chains.

It is found in the cell inner membrane. Functionally, f(1)F(0) ATP synthase produces ATP from ADP in the presence of a proton or sodium gradient. F-type ATPases consist of two structural domains, F(1) containing the extramembraneous catalytic core and F(0) containing the membrane proton channel, linked together by a central stalk and a peripheral stalk. During catalysis, ATP synthesis in the catalytic domain of F(1) is coupled via a rotary mechanism of the central stalk subunits to proton translocation. In terms of biological role, component of the F(0) channel, it forms part of the peripheral stalk, linking F(1) to F(0). This chain is ATP synthase subunit b, found in Campylobacter concisus (strain 13826).